We begin with the raw amino-acid sequence, 223 residues long: Uracil-DNA glycosylase (223 aa).

Asp61 acts as the Proton acceptor in catalysis.

The protein belongs to the uracil-DNA glycosylase (UDG) superfamily. UNG family.

It is found in the cytoplasm. The catalysed reaction is Hydrolyzes single-stranded DNA or mismatched double-stranded DNA and polynucleotides, releasing free uracil.. Its function is as follows. Excises uracil residues from the DNA which can arise as a result of misincorporation of dUMP residues by DNA polymerase or due to deamination of cytosine. The protein is Uracil-DNA glycosylase of Histophilus somni (strain 129Pt) (Haemophilus somnus).